The following is a 925-amino-acid chain: Calpain-B (925 aa).

One can recognise a Calpain catalytic domain in the interval 259–558 (MFEDPDFPAT…FDRVEICNLS (300 aa)). Catalysis depends on residues Cys-314, His-470, and Asn-498. Residues 559 to 728 (PDSLTEDQQH…TRNNMEENDD (170 aa)) form a domain III region. The disordered stretch occupies residues 723–753 (MEENDDEVGFGETDDRIAPSLPPPTPKEEDD). A linker region spans residues 729–748 (EVGFGETDDRIAPSLPPPTP). The interval 749-925 (KEEDDPQRIA…DDWLERTIYS (177 aa)) is domain IV. EF-hand domains are found at residues 796-831 (FSKD…IAKW) and 826-861 (TDIA…AGYH). Asp-809, Asp-811, Ser-813, Arg-815, Glu-820, Asp-839, Thr-843, Ser-845, and His-850 together coordinate Ca(2+).

It belongs to the peptidase C2 family. Post-translationally, undergoes calcium-dependent autolytic cleavage between Asn-74 and Ala-75 and between Gln-224 and Asn-225 to produce two major products, calpain B catalytic subunit 1 and calpain B catalytic subunit 2. This autolysis is necessary for activation of the protein. In terms of tissue distribution, strongly expressed in follicular and border cells of the oocyte. Ubiquitously expressed in early embryos. Localized to the trachea and their orifices, and to the larynx of late embryos. Restricted to the salivary gland in third instar larvae.

It localises to the cytoplasm. The protein resides in the membrane. Activated by millimolar concentrations of calcium. In terms of biological role, calcium-regulated non-lysosomal thiol-protease. This chain is Calpain-B, found in Drosophila melanogaster (Fruit fly).